Here is a 507-residue protein sequence, read N- to C-terminus: ATP synthase subunit alpha, chloroplastic (507 aa).

170-177 (GDRQTGKT) is a binding site for ATP. Ser383 carries the phosphoserine modification.

The protein belongs to the ATPase alpha/beta chains family. F-type ATPases have 2 components, CF(1) - the catalytic core - and CF(0) - the membrane proton channel. CF(1) has five subunits: alpha(3), beta(3), gamma(1), delta(1), epsilon(1). CF(0) has four main subunits: a, b, b' and c. Post-translationally, only phosphorylated in mesophyll cells, and only when cells are grown under high rather than low light regimes (70 vs 900 umol photons/m-2/s).

It is found in the plastid. Its subcellular location is the chloroplast thylakoid membrane. The enzyme catalyses ATP + H2O + 4 H(+)(in) = ADP + phosphate + 5 H(+)(out). In terms of biological role, produces ATP from ADP in the presence of a proton gradient across the membrane. The alpha chain is a regulatory subunit. The chain is ATP synthase subunit alpha, chloroplastic from Zea mays (Maize).